A 410-amino-acid polypeptide reads, in one-letter code: Diguanylate cyclase DgcM (410 aa).

PAS domains follow at residues threonine 3–aspartate 70 and glycine 129–glycine 198. Residues glycine 199–histidine 251 enclose the PAC domain. Positions glutamine 283–alanine 410 constitute a GGDEF domain. Aspartate 291 lines the Mg(2+) pocket. Positions 299, 304, and 308 each coordinate substrate. A Mg(2+)-binding site is contributed by glutamate 334. Glutamate 334 (proton acceptor) is an active-site residue.

Requires Mg(2+) as cofactor.

The catalysed reaction is 2 GTP = 3',3'-c-di-GMP + 2 diphosphate. It participates in purine metabolism; 3',5'-cyclic di-GMP biosynthesis. Functionally, part of a signaling cascade that regulates curli biosynthesis. The cascade is composed of two cyclic-di-GMP (c-di-GMP) control modules, in which c-di-GMP controlled by the DgcE/PdeH pair (module I) regulates the activity of the DgcM/PdeR pair (module II), which in turn regulates activity of the transcription factor MlrA and expression of the master biofilm regulator csgD. This is Diguanylate cyclase DgcM from Escherichia coli O157:H7.